Here is a 424-residue protein sequence, read N- to C-terminus: Hemagglutinin-esterase (424 aa).

The N-terminal stretch at 1–16 (MFLLPRFVLVSCIIGS) is a signal peptide. The esterase domain 1 stretch occupies residues 7–127 (FVLVSCIIGS…SNDIWMQNKG (121 aa)). Residues 17–392 (LGFDNPPTNV…PICVYDPLPI (376 aa)) are Virion surface-facing. The Nucleophile role is filled by serine 40. Cysteine 44 and cysteine 65 are disulfide-bonded. 5 N-linked (GlcNAc...) asparagine; by host glycosylation sites follow: asparagine 54, asparagine 89, asparagine 153, asparagine 236, and asparagine 301. Intrachain disulfides connect cysteine 113/cysteine 162, cysteine 197/cysteine 276, and cysteine 205/cysteine 249. The interval 128 to 266 (LFYTQVYKNM…GNYLAISNEL (139 aa)) is receptor binding. Residues 267–379 (LLTVPTKAIC…RCPTAADINT (113 aa)) are esterase domain 2. Cysteine 307 and cysteine 312 are joined by a disulfide. N-linked (GlcNAc...) asparagine; by host glycosylation occurs at asparagine 316. Active-site charge relay system residues include aspartate 326 and histidine 329. A disulfide bond links cysteine 347 and cysteine 371. The N-linked (GlcNAc...) asparagine; by host glycan is linked to asparagine 358. Residues 393 to 413 (IFLGILLGVAVIIIVVLLLYF) form a helical membrane-spanning segment. Over 414 to 424 (MVDNGTRLHDA) the chain is Intravirion. Asparagine 417 carries N-linked (GlcNAc...) asparagine; by host glycosylation.

This sequence belongs to the influenza type C/coronaviruses hemagglutinin-esterase family. In terms of assembly, homodimer; disulfide-linked. Forms a complex with the M protein in the pre-Golgi. Associates then with S-M complex to form a ternary complex S-M-HE. Post-translationally, N-glycosylated in the host RER.

Its subcellular location is the virion membrane. It localises to the host cell membrane. It carries out the reaction N-acetyl-9-O-acetylneuraminate + H2O = N-acetylneuraminate + acetate + H(+). The catalysed reaction is N-acetyl-4-O-acetylneuraminate + H2O = N-acetylneuraminate + acetate + H(+). In terms of biological role, structural protein that makes short spikes at the surface of the virus. Contains receptor binding and receptor-destroying activities. Mediates de-O-acetylation of N-acetyl-4-O-acetylneuraminic acid, which is probably the receptor determinant recognized by the virus on the surface of erythrocytes and susceptible cells. This receptor-destroying activity is important for virus release as it probably helps preventing self-aggregation and ensures the efficient spread of the progeny virus from cell to cell. May serve as a secondary viral attachment protein for initiating infection, the spike protein being the major one. May become a target for both the humoral and the cellular branches of the immune system. This is Hemagglutinin-esterase from Bovine coronavirus (strain Ontario) (BCoV).